We begin with the raw amino-acid sequence, 786 residues long: MADSGDKDVSKSVRFDKESIESKKRSSVDDSASSYSSSSSGQDRSEGKRNNVKFSTEDSDDEDGNLFSRMIKNLKSNGGAGLAPGLSKANSNQEKTDLEDNDNVVTGHSDDIPMEDFTSEAQNILQGHSNLTPAQIEALNGQGLSDIETTASSTDLNFLAPAIDHFDDFDGDGEEENDGFVDTHGYVAPPTQVRGGVLGSLLKLYQEQDNATIETSSMYSQSSYGESTANLMSIDSGETEVPSEHKPKDHKNVFMRSGGKVAGLAMNAPGQIYGHGSKAAGHIYGHGRKGAGHIYNQGKKGAGHIYSQKNKLSSADLSTEGLKKSGHKAKKVAGKMPKLRKRMLAEAKITVHIAELLQRQRFILRMCKALMLYGAPTHRLEEYMIMTSRVLEIDGQYLYLPGCMIVSFGDATTRTSEVQLVRCTQGLNLWKLHQVHGVYKKVIHDQMGADEGNIEIDRILREKNLYPPWVCVFLYGFCSAMVTPYAFGGHWINLAITFFMGSCVGMMQFILSEKSLMYSNVFEITASIVVSFCGRAFGSIPNSNICFGAITQGSLALILPGYIILCGSLELQSRSLVAGSVRMFYAIIYSLFLGFGITLGAALFGWMYKGATNEISCGYPISPWFRFLFVPAFTIGISLINQANWTQLPAMVFISCTGYVVTYWSGKHFQNSTEFTAALASFVIGILGNLYSRIWQGLAVSAMLPAIFVQVPSGIASQNSLLSGLQSANQIVGRNGTNAVQTVDLSNSMSFGITMIEVSIGISVGLFASTLCVYPFGKKKTGLFSL.

Positions 1–28 (MADSGDKDVSKSVRFDKESIESKKRSSV) are enriched in basic and acidic residues. Disordered stretches follow at residues 1 to 65 (MADS…EDGN) and 77 to 103 (NGGA…DNDN). The span at 29–42 (DDSASSYSSSSSGQ) shows a compositional bias: low complexity. 10 helical membrane passes run 469 to 489 (WVCV…AFGG), 491 to 511 (WINL…QFIL), 521 to 541 (VFEI…GSIP), 545 to 565 (ICFG…YIIL), 584 to 604 (FYAI…AALF), 620 to 640 (PISP…ISLI), 645 to 665 (WTQL…TYWS), 675 to 695 (FTAA…SRIW), 697 to 717 (GLAV…GIAS), and 751 to 771 (FGIT…ASTL).

This sequence belongs to the ThrE exporter (TC 2.A.79) family.

It localises to the membrane. The polypeptide is Pheromone-regulated membrane protein 10 (Candida glabrata (strain ATCC 2001 / BCRC 20586 / JCM 3761 / NBRC 0622 / NRRL Y-65 / CBS 138) (Yeast)).